The primary structure comprises 505 residues: ATP synthase subunit alpha (505 aa).

Position 170 to 177 (Gly-170 to Ser-177) interacts with ATP.

It belongs to the ATPase alpha/beta chains family. F-type ATPases have 2 components, CF(1) - the catalytic core - and CF(0) - the membrane proton channel. CF(1) has five subunits: alpha(3), beta(3), gamma(1), delta(1), epsilon(1). CF(0) has four main subunits: a(1), b(1), b'(1) and c(9-12).

The protein resides in the cellular thylakoid membrane. It carries out the reaction ATP + H2O + 4 H(+)(in) = ADP + phosphate + 5 H(+)(out). Functionally, produces ATP from ADP in the presence of a proton gradient across the membrane. The alpha chain is a regulatory subunit. The polypeptide is ATP synthase subunit alpha (Prochlorococcus marinus (strain MIT 9312)).